We begin with the raw amino-acid sequence, 476 residues long: Glycogen synthase (476 aa).

Lys-15 contacts ADP-alpha-D-glucose.

It belongs to the glycosyltransferase 1 family. Bacterial/plant glycogen synthase subfamily.

It catalyses the reaction [(1-&gt;4)-alpha-D-glucosyl](n) + ADP-alpha-D-glucose = [(1-&gt;4)-alpha-D-glucosyl](n+1) + ADP + H(+). It functions in the pathway glycan biosynthesis; glycogen biosynthesis. Functionally, synthesizes alpha-1,4-glucan chains using ADP-glucose. The polypeptide is Glycogen synthase (Chlamydia pneumoniae (Chlamydophila pneumoniae)).